Reading from the N-terminus, the 357-residue chain is Arginine kinase Scy p 2.0101 (357 aa).

The region spanning 9-91 (KLEEGFKKLE…FDPIIEDYHK (83 aa)) is the Phosphagen kinase N-terminal domain. 64-68 (GVGVY) is an L-arginine binding site. IgE-binding and beta-hexosaminidase release from rat basophilic leukemia (RBL) cells regions lie at residues 113–127 (VDPD…RVRC) and 127–155 (CGRS…VSST). Residues 119-356 (FVISTRVRCG…LELIKIEKEM (238 aa)) form the Phosphagen kinase C-terminal domain. 122 to 126 (STRVR) serves as a coordination point for ATP. An ATP-binding site is contributed by His185. A disulfide bridge connects residues Cys201 and Cys271. The segment at 204–218 (WPTGRGIYHNDNKTF) is igE-binding and beta-hexosaminidase release from rat basophilic leukemia (RBL) cells. Residues 211–225 (YHNDNKTFLVWCNEE) are igE-binding, but no beta-hexosaminidase release from rat basophilic leukemia (RBL) cells. Glu225 lines the L-arginine pocket. Arg229 contributes to the ATP binding site. Cys271 contributes to the L-arginine binding site. ATP contacts are provided by residues 280–284 (RASVH) and 309–314 (RGTRGE). An L-arginine-binding site is contributed by Glu314. The segment at 316-330 (TEAEGGVYDISNKRR) is igE-binding, but no beta-hexosaminidase release from rat basophilic leukemia (RBL) cells.

This sequence belongs to the ATP:guanido phosphotransferase family. Glycosylated. In terms of tissue distribution, muscle (at protein level).

The enzyme catalyses L-arginine + ATP = N(omega)-phospho-L-arginine + ADP + H(+). In terms of biological role, catalyzes the reversible transfer of high energy ATP gamma-phosphate group to L-arginine. This chain is Arginine kinase Scy p 2.0101, found in Scylla paramamosain (Mud crab).